Reading from the N-terminus, the 230-residue chain is ATP-dependent dethiobiotin synthetase BioD (230 aa).

12–17 (DVGKTV) is an ATP binding site. T16 provides a ligand contact to Mg(2+). K37 is a catalytic residue. A substrate-binding site is contributed by T41. Residues D49, 108–111 (EGAG), 168–169 (GS), and 198–200 (PEG) contribute to the ATP site. 2 residues coordinate Mg(2+): D49 and E108.

Belongs to the dethiobiotin synthetase family. As to quaternary structure, homodimer. The cofactor is Mg(2+).

The protein localises to the cytoplasm. It carries out the reaction (7R,8S)-7,8-diammoniononanoate + CO2 + ATP = (4R,5S)-dethiobiotin + ADP + phosphate + 3 H(+). Its pathway is cofactor biosynthesis; biotin biosynthesis; biotin from 7,8-diaminononanoate: step 1/2. Its function is as follows. Catalyzes a mechanistically unusual reaction, the ATP-dependent insertion of CO2 between the N7 and N8 nitrogen atoms of 7,8-diaminopelargonic acid (DAPA, also called 7,8-diammoniononanoate) to form a ureido ring. The polypeptide is ATP-dependent dethiobiotin synthetase BioD (Corynebacterium kroppenstedtii (strain DSM 44385 / JCM 11950 / CIP 105744 / CCUG 35717)).